The following is a 130-amino-acid chain: Glycine cleavage system H protein (130 aa).

The Lipoyl-binding domain maps to 24-106 (SVTVGITEHA…YGDGWIMRIQ (83 aa)). K65 carries the N6-lipoyllysine modification.

This sequence belongs to the GcvH family. As to quaternary structure, the glycine cleavage system is composed of four proteins: P, T, L and H. (R)-lipoate is required as a cofactor.

Functionally, the glycine cleavage system catalyzes the degradation of glycine. The H protein shuttles the methylamine group of glycine from the P protein to the T protein. The chain is Glycine cleavage system H protein from Halorhodospira halophila (strain DSM 244 / SL1) (Ectothiorhodospira halophila (strain DSM 244 / SL1)).